The following is a 792-amino-acid chain: Endonuclease MutS2 (792 aa).

Residue 334 to 341 (GPNTGGKT) participates in ATP binding. Positions 717–792 (IDLRGMMLSE…ENGVTVVELK (76 aa)) constitute a Smr domain.

Belongs to the DNA mismatch repair MutS family. MutS2 subfamily. As to quaternary structure, homodimer. Binds to stalled ribosomes, contacting rRNA.

Functionally, endonuclease that is involved in the suppression of homologous recombination and thus may have a key role in the control of bacterial genetic diversity. Its function is as follows. Acts as a ribosome collision sensor, splitting the ribosome into its 2 subunits. Detects stalled/collided 70S ribosomes which it binds and splits by an ATP-hydrolysis driven conformational change. Acts upstream of the ribosome quality control system (RQC), a ribosome-associated complex that mediates the extraction of incompletely synthesized nascent chains from stalled ribosomes and their subsequent degradation. Probably generates substrates for RQC. This Ruminiclostridium cellulolyticum (strain ATCC 35319 / DSM 5812 / JCM 6584 / H10) (Clostridium cellulolyticum) protein is Endonuclease MutS2.